Reading from the N-terminus, the 45-residue chain is Photosystem II reaction center protein K (45 aa).

A propeptide spanning residues 1–8 is cleaved from the precursor; sequence MDVNFLLS. The helical transmembrane segment at 20–40 threads the bilayer; sequence IVDVMPAIPVFFLLLAFVWQA.

The protein belongs to the PsbK family. In terms of assembly, PSII is composed of 1 copy each of membrane proteins PsbA, PsbB, PsbC, PsbD, PsbE, PsbF, PsbH, PsbI, PsbJ, PsbK, PsbL, PsbM, PsbT, PsbX, PsbY, PsbZ, Psb30/Ycf12, at least 3 peripheral proteins of the oxygen-evolving complex and a large number of cofactors. It forms dimeric complexes.

It localises to the plastid. The protein localises to the chloroplast thylakoid membrane. In terms of biological role, one of the components of the core complex of photosystem II (PSII). PSII is a light-driven water:plastoquinone oxidoreductase that uses light energy to abstract electrons from H(2)O, generating O(2) and a proton gradient subsequently used for ATP formation. It consists of a core antenna complex that captures photons, and an electron transfer chain that converts photonic excitation into a charge separation. This Emiliania huxleyi (Coccolithophore) protein is Photosystem II reaction center protein K.